A 407-amino-acid polypeptide reads, in one-letter code: RING-H2 finger protein ATL43 (407 aa).

Positions 1–22 (MSSSSLILLFSTLSLFLNVSLA) are cleaved as a signal peptide. The chain crosses the membrane as a helical span at residues 57–77 (GIAVVIAVLTAFFSLTFLLLL). The RING-type; atypical zinc finger occupies 146–188 (CAVCLARFEPTEVLRLLPKCKHAFHVECVDTWLDAHSTCPLCR).

The protein belongs to the RING-type zinc finger family. ATL subfamily.

It is found in the membrane. The catalysed reaction is S-ubiquitinyl-[E2 ubiquitin-conjugating enzyme]-L-cysteine + [acceptor protein]-L-lysine = [E2 ubiquitin-conjugating enzyme]-L-cysteine + N(6)-ubiquitinyl-[acceptor protein]-L-lysine.. It participates in protein modification; protein ubiquitination. The polypeptide is RING-H2 finger protein ATL43 (ATL43) (Arabidopsis thaliana (Mouse-ear cress)).